The sequence spans 598 residues: MQTFNADIAIIGAGGAGLRAAIAAAEANPQLKIALISKVYPMRSHTVAAEGGSAAVTQAHDSYDFHFNDTVSGGDWLCEQDVVDYFVEHCPTEMTQLELWGCPWSRKEDGSVNVRRFGGMKIERTWFAADKTGFHMLHTLFQTSLKYPQIQRFDEHFVLDILVDEGHARGVVAINMMEGTKVQIRANAVIMATGGAGRVYRFNTNGGIVTGDGMGIALRHGVPLRDMEFVQYHPTGLPGSGILMTEGCRGEGGILVNKDGYRYLQDYGLGPETPLGKPENKYMELGPRDKVSQAFWHEWRAGRTIKTHRGDVVHLDLRHLGAKKLHERLPFICELAKAYVGVDPVNEPIPVRPTAHYTMGGIETNQRTETRIKGLFAVGECSSVGLHGANRLGSNSLAELVVFGRLAGEEAVRRAQEATPANASALDAQTRDIEDNLKKLMNQKGSENWAQIRDEMGEAMEEGCGIYRTPELMQKTIDKLTELKERFKHVEIKDTSSVFNTDLLYKIELGFGLDVAECMAHSAFNRKESRGAHQRLDEGCTERDDVNFLKHTLAFYNPEGAPRLEYSDVKITKSAPAKRVYGGEATAQDKQNKEKANG.

FAD is bound by residues 12–16, 36–38, 44–52, 156–158, and aspartate 212; these read GAGGA, ISK, SHTVAAEGG, and HFV. A Tele-8alpha-FAD histidine modification is found at histidine 45. Catalysis depends on residues histidine 233 and arginine 249. FAD-binding positions include 356–357, glutamate 380, and 391–397; these read HY and RLGSNSL. Positions 577-598 are disordered; it reads AKRVYGGEATAQDKQNKEKANG.

Belongs to the FAD-dependent oxidoreductase 2 family. FRD/SDH subfamily. In terms of assembly, part of an enzyme complex containing four subunits: a flavoprotein (FrdA), an iron-sulfur protein (FrdB), and two hydrophobic anchor proteins (FrdC and FrdD). Requires FAD as cofactor.

The protein resides in the cell inner membrane. It carries out the reaction a quinone + succinate = fumarate + a quinol. The catalysed reaction is a menaquinone + succinate = a menaquinol + fumarate. Its function is as follows. Two distinct, membrane-bound, FAD-containing enzymes are responsible for the catalysis of fumarate and succinate interconversion; the fumarate reductase is used in anaerobic growth, and the succinate dehydrogenase is used in aerobic growth. The protein is Fumarate reductase flavoprotein subunit (frdA) of Proteus vulgaris.